We begin with the raw amino-acid sequence, 422 residues long: Adenylosuccinate synthetase (422 aa).

Residues 11-17 and 39-41 each bind GTP; these read GDEGKGK and GHT. D12 functions as the Proton acceptor in the catalytic mechanism. D12 and G39 together coordinate Mg(2+). Residues 12–15, 37–40, T129, R143, N219, T234, and R298 each bind IMP; these read DEGK and NAGH. H40 serves as the catalytic Proton donor. A substrate-binding site is contributed by 294–300; it reads VTTGRKR. GTP-binding positions include R300, 326-328, and 411-413; these read KLD and GTG.

It belongs to the adenylosuccinate synthetase family. In terms of assembly, homodimer. It depends on Mg(2+) as a cofactor.

It is found in the cytoplasm. The enzyme catalyses IMP + L-aspartate + GTP = N(6)-(1,2-dicarboxyethyl)-AMP + GDP + phosphate + 2 H(+). It participates in purine metabolism; AMP biosynthesis via de novo pathway; AMP from IMP: step 1/2. Plays an important role in the de novo pathway and in the salvage pathway of purine nucleotide biosynthesis. Catalyzes the first committed step in the biosynthesis of AMP from IMP. In Talaromyces marneffei (strain ATCC 18224 / CBS 334.59 / QM 7333) (Penicillium marneffei), this protein is Adenylosuccinate synthetase.